Reading from the N-terminus, the 261-residue chain is Cytochrome c oxidase subunit 3 (261 aa).

Residues 1 to 15 (MVHQSHAYHMLKPSP) are Mitochondrial matrix-facing. A helical membrane pass occupies residues 16 to 34 (WPLTGALSALLMTSGLAMW). At 35 to 40 (FHFHST) the chain is on the mitochondrial intermembrane side. A helical transmembrane segment spans residues 41–66 (TLLLTGMLTNALTMYQWWRDVVREST). The Mitochondrial matrix segment spans residues 67-72 (YQGHHT). The helical transmembrane segment at 73-105 (LPVQKGLRYGMILFITSEVFFFAGFFWAFYHSS) threads the bilayer. Residues 106–128 (LAPTPQLGGHWPPTGITPLNPLE) lie on the Mitochondrial intermembrane side of the membrane. Residues 129–152 (VPLLNTAVLLASGVSITWAHHSLM) form a helical membrane-spanning segment. Residues 153 to 155 (ENN) lie on the Mitochondrial matrix side of the membrane. Residues 156–183 (RTQMIQALLITILLGIYFTLLQASEYIE) traverse the membrane as a helical segment. At 184-190 (APFTISD) the chain is on the mitochondrial intermembrane side. Residues 191-223 (GIYGSTFFMTTGFHGLHVIIGSTFLTVCLSCQL) form a helical membrane-spanning segment. At 224–232 (LFHFTSKHH) the chain is on the mitochondrial matrix side. Residues 233–256 (FGFEAAAWYWHFVDVVWLFLYVSI) form a helical membrane-spanning segment. Residues 257–261 (YWWGS) lie on the Mitochondrial intermembrane side of the membrane.

It belongs to the cytochrome c oxidase subunit 3 family. In terms of assembly, component of the cytochrome c oxidase (complex IV, CIV), a multisubunit enzyme composed of 14 subunits. The complex is composed of a catalytic core of 3 subunits MT-CO1, MT-CO2 and MT-CO3, encoded in the mitochondrial DNA, and 11 supernumerary subunits COX4I, COX5A, COX5B, COX6A, COX6B, COX6C, COX7A, COX7B, COX7C, COX8 and NDUFA4, which are encoded in the nuclear genome. The complex exists as a monomer or a dimer and forms supercomplexes (SCs) in the inner mitochondrial membrane with NADH-ubiquinone oxidoreductase (complex I, CI) and ubiquinol-cytochrome c oxidoreductase (cytochrome b-c1 complex, complex III, CIII), resulting in different assemblies (supercomplex SCI(1)III(2)IV(1) and megacomplex MCI(2)III(2)IV(2)).

It localises to the mitochondrion inner membrane. The enzyme catalyses 4 Fe(II)-[cytochrome c] + O2 + 8 H(+)(in) = 4 Fe(III)-[cytochrome c] + 2 H2O + 4 H(+)(out). Its function is as follows. Component of the cytochrome c oxidase, the last enzyme in the mitochondrial electron transport chain which drives oxidative phosphorylation. The respiratory chain contains 3 multisubunit complexes succinate dehydrogenase (complex II, CII), ubiquinol-cytochrome c oxidoreductase (cytochrome b-c1 complex, complex III, CIII) and cytochrome c oxidase (complex IV, CIV), that cooperate to transfer electrons derived from NADH and succinate to molecular oxygen, creating an electrochemical gradient over the inner membrane that drives transmembrane transport and the ATP synthase. Cytochrome c oxidase is the component of the respiratory chain that catalyzes the reduction of oxygen to water. Electrons originating from reduced cytochrome c in the intermembrane space (IMS) are transferred via the dinuclear copper A center (CU(A)) of subunit 2 and heme A of subunit 1 to the active site in subunit 1, a binuclear center (BNC) formed by heme A3 and copper B (CU(B)). The BNC reduces molecular oxygen to 2 water molecules using 4 electrons from cytochrome c in the IMS and 4 protons from the mitochondrial matrix. This chain is Cytochrome c oxidase subunit 3 (MT-CO3), found in Pongo pygmaeus (Bornean orangutan).